The sequence spans 221 residues: Phosphoglycolate phosphatase (221 aa).

Catalysis depends on Asp-7, which acts as the Nucleophile. Mg(2+)-binding residues include Asp-7 and Asp-9. A substrate-binding site is contributed by Lys-148. Residues Asp-171 and Asp-175 each coordinate Mg(2+).

Belongs to the archaeal SPP-like hydrolase family. The cofactor is Mg(2+).

The catalysed reaction is 2-phosphoglycolate + H2O = glycolate + phosphate. Its function is as follows. Catalyzes the dephosphorylation of 2-phosphoglycolate. This Methanothermobacter thermautotrophicus (strain ATCC 29096 / DSM 1053 / JCM 10044 / NBRC 100330 / Delta H) (Methanobacterium thermoautotrophicum) protein is Phosphoglycolate phosphatase.